The following is a 278-amino-acid chain: ATP synthase subunit a (278 aa).

A run of 6 helical transmembrane segments spans residues 43–63 (TWHIDSLFFSVGLGVLFLWIF), 104–124 (IAPLALTIFVWVFMMNFMDMI), 148–168 (DVNITFSLAIGVFLLIIFYSI), 191–211 (IPVNLLLETVTLIAKPISLAL), 222–242 (LIFILIALMYGTNLLLSTLGV), and 249–269 (LIFHILVITLQAFIFMMLTIV).

This sequence belongs to the ATPase A chain family. In terms of assembly, F-type ATPases have 2 components, CF(1) - the catalytic core - and CF(0) - the membrane proton channel. CF(1) has five subunits: alpha(3), beta(3), gamma(1), delta(1), epsilon(1). CF(0) has three main subunits: a(1), b(2) and c(9-12). The alpha and beta chains form an alternating ring which encloses part of the gamma chain. CF(1) is attached to CF(0) by a central stalk formed by the gamma and epsilon chains, while a peripheral stalk is formed by the delta and b chains.

Its subcellular location is the cell inner membrane. Key component of the proton channel; it plays a direct role in the translocation of protons across the membrane. This chain is ATP synthase subunit a, found in Shewanella baltica (strain OS185).